We begin with the raw amino-acid sequence, 339 residues long: MLKRLLSKCAEGKTLTEEEAYEAMATVMDGAATDSQIASLLSMLCLRGETVDELTGFVRAMRDRMMAIDAGDDVIDTCGTGGDGAATFNISTAAAIVISSLGVKVAKHGNRAVSSKSGSADVLERLGINIQSSPDAAKEALETNGLTFLYAPLYHTAMKHAAGPRKEIGFRTVFNLIGPLANPARCKRQVVGVYSTRYAEKLAETMRRLGSEHVLFVTGRDGLDECSIATETDVVELKDGAIRRFVITPEEVGLPRGELADVQVHNPEESAALLEAVMTVTAPESAVNIVALNAGVALYAAGKTKTIADGVTMAKDAILSNAAYRQLQRLRAKEVVRDA.

Residues glycine 79, 82 to 83 (GD), threonine 87, 89 to 92 (NIST), 107 to 115 (KHGNRAVSS), and serine 119 contribute to the 5-phospho-alpha-D-ribose 1-diphosphate site. Glycine 79 contributes to the anthranilate binding site. Serine 91 contributes to the Mg(2+) binding site. Residue asparagine 110 coordinates anthranilate. Arginine 165 contributes to the anthranilate binding site. 2 residues coordinate Mg(2+): aspartate 224 and glutamate 225.

This sequence belongs to the anthranilate phosphoribosyltransferase family. Homodimer. The cofactor is Mg(2+).

It carries out the reaction N-(5-phospho-beta-D-ribosyl)anthranilate + diphosphate = 5-phospho-alpha-D-ribose 1-diphosphate + anthranilate. Its pathway is amino-acid biosynthesis; L-tryptophan biosynthesis; L-tryptophan from chorismate: step 2/5. In terms of biological role, catalyzes the transfer of the phosphoribosyl group of 5-phosphorylribose-1-pyrophosphate (PRPP) to anthranilate to yield N-(5'-phosphoribosyl)-anthranilate (PRA). The protein is Anthranilate phosphoribosyltransferase of Geobacillus thermodenitrificans (strain NG80-2).